Consider the following 99-residue polypeptide: Beta-2-microglobulin (99 aa).

The Ig-like C1-type domain maps to 5–92 (PNVQVYSRHP…KHVTLKEPMT (88 aa)). C25 and C80 are disulfide-bonded.

It belongs to the beta-2-microglobulin family. In terms of assembly, heterodimer of an alpha chain and a beta chain. Beta-2-microglobulin is the beta-chain of major histocompatibility complex class I molecules.

Its subcellular location is the secreted. In terms of biological role, component of the class I major histocompatibility complex (MHC). Involved in the presentation of peptide antigens to the immune system. This Oryctolagus cuniculus (Rabbit) protein is Beta-2-microglobulin (B2M).